The primary structure comprises 464 residues: E3 ubiquitin-protein ligase MYLIP-B (464 aa).

In terms of domain architecture, FERM spans 1–279; sequence MLCHITRPDS…EIHAFYRCDT (279 aa). An RING-type zinc finger spans residues 381–416; the sequence is CALCCEQEISAAFCPCGHMFCCYNCASQLQCCPVCR.

In terms of assembly, interacts with anxa5.

The protein resides in the cytoplasm. The protein localises to the cytosol. The enzyme catalyses S-ubiquitinyl-[E2 ubiquitin-conjugating enzyme]-L-cysteine + [acceptor protein]-L-lysine = [E2 ubiquitin-conjugating enzyme]-L-cysteine + N(6)-ubiquitinyl-[acceptor protein]-L-lysine.. It functions in the pathway protein modification; protein ubiquitination. Functionally, E3 ubiquitin-protein ligase that mediates ubiquitination and subsequent proteasomal degradation of myosin regulatory light chain (MRLC). Regulates cell movements during gastrulation by acting downstream of fz7 to antagonize the frizzled-signaling pathway. This chain is E3 ubiquitin-protein ligase MYLIP-B, found in Danio rerio (Zebrafish).